Consider the following 72-residue polypeptide: MDTRTPEVPCGDLLQNAAENLLLEVEEHFQALTTTLNLRMEEMGSRIEDLQRNVDDLMTQAGIENSIKEPAT.

Residues 12 to 62 (DLLQNAAENLLLEVEEHFQALTTTLNLRMEEMGSRIEDLQRNVDDLMTQAG) adopt a coiled-coil conformation.

The protein belongs to the HSBP1 family.

This chain is Heat shock factor-binding protein 1-like protein 1 (Hsbp1l1), found in Mus musculus (Mouse).